The chain runs to 960 residues: Lon protease homolog, mitochondrial (960 aa).

The transit peptide at 1 to 56 (MYRAGALVLRSATLRRTRFLAAHQNFATISSQRSSVLLAKSLESSIGGAGNQKKFY) directs the protein to the mitochondrion. Residues 92–352 (VPILAINRYP…IALLLIQKEK (261 aa)) form the Lon N-terminal domain. The tract at residues 195-250 (PKTDTPLNGRRARGKRAGLPPTPPPTPPLSTPTSAPEASATSPEEKEEKKDPERKG) is disordered. Over residues 214–224 (PPTPPPTPPLS) the composition is skewed to pro residues. The span at 225–236 (TPTSAPEASATS) shows a compositional bias: low complexity. Positions 237–250 (PEEKEEKKDPERKG) are enriched in basic and acidic residues. Position 505-512 (505-512 (GPPGVGKT)) interacts with ATP. The disordered stretch occupies residues 712-748 (EQQPEDEQPAATTAISENSDAEPVSTPSDPPTFTPEK). Residues 773 to 960 (VTPPGVIMGL…YDELYEHLFQ (188 aa)) enclose the Lon proteolytic domain. Active-site residues include Ser867 and Lys910.

Belongs to the peptidase S16 family. In terms of assembly, homohexamer or homoheptamer. Organized in a ring with a central cavity.

It localises to the mitochondrion matrix. The enzyme catalyses Hydrolysis of proteins in presence of ATP.. ATP-dependent serine protease that mediates the selective degradation of misfolded, unassembled or oxidatively damaged polypeptides as well as certain short-lived regulatory proteins in the mitochondrial matrix. May also have a chaperone function in the assembly of inner membrane protein complexes. Participates in the regulation of mitochondrial gene expression and in the maintenance of the integrity of the mitochondrial genome. Binds to mitochondrial DNA in a site-specific manner. In Caenorhabditis briggsae, this protein is Lon protease homolog, mitochondrial.